A 427-amino-acid polypeptide reads, in one-letter code: UDP-N-acetylglucosamine 1-carboxyvinyltransferase (427 aa).

22-23 (KN) is a binding site for phosphoenolpyruvate. R92 is a UDP-N-acetyl-alpha-D-glucosamine binding site. The active-site Proton donor is D116. The UDP-N-acetyl-alpha-D-glucosamine site is built by D312 and M334.

This sequence belongs to the EPSP synthase family. MurA subfamily.

Its subcellular location is the cytoplasm. It carries out the reaction phosphoenolpyruvate + UDP-N-acetyl-alpha-D-glucosamine = UDP-N-acetyl-3-O-(1-carboxyvinyl)-alpha-D-glucosamine + phosphate. It participates in cell wall biogenesis; peptidoglycan biosynthesis. Its function is as follows. Cell wall formation. Adds enolpyruvyl to UDP-N-acetylglucosamine. This chain is UDP-N-acetylglucosamine 1-carboxyvinyltransferase, found in Borreliella burgdorferi (strain ATCC 35210 / DSM 4680 / CIP 102532 / B31) (Borrelia burgdorferi).